Here is a 317-residue protein sequence, read N- to C-terminus: E3 ubiquitin-protein ligase NRDP1 (317 aa).

The RING-type; degenerate zinc-finger motif lies at 18–57; sequence CPICSGVLEEPVQAPHCEHAFCNACITQWFSQQQTCPVDR. Positions 135 to 175 form a coiled coil; that stretch reads IKHLRSVVQQQQIRIGELEKTAAESKHQLSEQKRDIQLLKA.

It catalyses the reaction S-ubiquitinyl-[E2 ubiquitin-conjugating enzyme]-L-cysteine + [acceptor protein]-L-lysine = [E2 ubiquitin-conjugating enzyme]-L-cysteine + N(6)-ubiquitinyl-[acceptor protein]-L-lysine.. It participates in protein modification; protein ubiquitination. Functionally, acts as E3 ubiquitin-protein ligase and regulates the degradation of target proteins. This chain is E3 ubiquitin-protein ligase NRDP1 (rnf41), found in Xenopus laevis (African clawed frog).